The primary structure comprises 116 residues: Large ribosomal subunit protein bL19 (116 aa).

The protein belongs to the bacterial ribosomal protein bL19 family.

Its function is as follows. This protein is located at the 30S-50S ribosomal subunit interface and may play a role in the structure and function of the aminoacyl-tRNA binding site. This Syntrophomonas wolfei subsp. wolfei (strain DSM 2245B / Goettingen) protein is Large ribosomal subunit protein bL19.